We begin with the raw amino-acid sequence, 373 residues long: MLIIIRPSGEIALKSPRSRRNFEHTLANNIRSVIKEGKIWRSQGVLFLEVNDNNKNIEELSKVFGIASFSPVMSIKSYNNNLEDIINKAKEVFAEIVKGKIFSVRAKRIGSHNFTSLDVQRKVGEALYPFSRGVNLENPEVEVFIEIRNDVAYFYYKIIKGPRGLPVGVAGKTVVLFSGGIDSPVATWMMMKRGSIPVILNFNLGGSVHRKFVLEELSVLRKWSGGHKLKLFIVNGTDVLIKLSQIEKRNRVVMLKRVMYKVAERLCDKANAKSITTGESLSQVSSQTMTNLYVTEYGIKYPIFRPLIGFDKEEIVELARKIGTYEYSIKLPEYCAISTKARTSVELDEVLKDEENLNIDYEKVLENSEVIEI.

The THUMP domain maps to 54 to 158; sequence NKNIEELSKV…NDVAYFYYKI (105 aa). ATP contacts are provided by residues 176–177, 201–202, Lys256, Gly278, and Gln287; these read LF and NF.

Belongs to the ThiI family.

Its subcellular location is the cytoplasm. It catalyses the reaction [ThiI sulfur-carrier protein]-S-sulfanyl-L-cysteine + a uridine in tRNA + 2 reduced [2Fe-2S]-[ferredoxin] + ATP + H(+) = [ThiI sulfur-carrier protein]-L-cysteine + a 4-thiouridine in tRNA + 2 oxidized [2Fe-2S]-[ferredoxin] + AMP + diphosphate. The enzyme catalyses [ThiS sulfur-carrier protein]-C-terminal Gly-Gly-AMP + S-sulfanyl-L-cysteinyl-[cysteine desulfurase] + AH2 = [ThiS sulfur-carrier protein]-C-terminal-Gly-aminoethanethioate + L-cysteinyl-[cysteine desulfurase] + A + AMP + 2 H(+). The protein operates within cofactor biosynthesis; thiamine diphosphate biosynthesis. Functionally, catalyzes the ATP-dependent transfer of a sulfur to tRNA to produce 4-thiouridine in position 8 of tRNAs, which functions as a near-UV photosensor. Also catalyzes the transfer of sulfur to the sulfur carrier protein ThiS, forming ThiS-thiocarboxylate. This is a step in the synthesis of thiazole, in the thiamine biosynthesis pathway. The sulfur is donated as persulfide by IscS. The polypeptide is Probable tRNA sulfurtransferase (Saccharolobus islandicus (strain Y.N.15.51 / Yellowstone #2) (Sulfolobus islandicus)).